We begin with the raw amino-acid sequence, 126 residues long: Large ribosomal subunit protein bL17 (126 aa).

This sequence belongs to the bacterial ribosomal protein bL17 family. Part of the 50S ribosomal subunit. Contacts protein L32.

The sequence is that of Large ribosomal subunit protein bL17 from Magnetococcus marinus (strain ATCC BAA-1437 / JCM 17883 / MC-1).